The primary structure comprises 407 residues: Uronyl 2-sulfotransferase (407 aa).

Residues 1–20 are disordered; that stretch reads MKKKQQQHPGGGTDPWPHGA. Residues 1–49 lie on the Cytoplasmic side of the membrane; it reads MKKKQQQHPGGGTDPWPHGAPVGGAPPCLGSCKRRIPLLPFLRFSLRDY. Residues 50–70 traverse the membrane as a helical; Signal-anchor for type II membrane protein segment; the sequence is GFCMATLLVFCLGSLFYQLSG. Residues 71 to 407 are Lumenal-facing; that stretch reads GPPRFLLDLR…EKWLEDIYKR (337 aa). Asn85, Asn141, and Asn156 each carry an N-linked (GlcNAc...) asparagine glycan. Residue His169 is part of the active site. Asn174 and Asn320 each carry an N-linked (GlcNAc...) asparagine glycan. The segment covering 386–400 has biased composition (acidic residues); that stretch reads TEEPIDDEEQDDEKW. Positions 386 to 407 are disordered; that stretch reads TEEPIDDEEQDDEKWLEDIYKR.

The protein belongs to the sulfotransferase 3 family.

Its subcellular location is the golgi apparatus membrane. Sulfotransferase that catalyzes the transfer of sulfate to the position 2 of uronyl residues in glycosaminoglycan chains. Has mainly activity toward iduronyl residues in dermatan sulfate, and weaker activity toward glucuronyl residues of chondroitin sulfate. Has no activity toward desulfated N-resulfated heparin. This Mus musculus (Mouse) protein is Uronyl 2-sulfotransferase.